The sequence spans 245 residues: Protein FAM133B (245 aa).

2 disordered regions span residues 19–38 (SRGP…NRPR) and 69–245 (WKKE…SDSP). Positions 69-80 (WKKELEKHREKL) are enriched in basic and acidic residues. At serine 82 the chain carries Phosphoserine. A compositionally biased stretch (basic residues) spans 89 to 102 (KKRQKKKKEKKKSG). The span at 103-119 (RYSSSSSSSSDSSSSSS) shows a compositional bias: low complexity. Basic residues predominate over residues 128-140 (QTKRRKKKKSHCH). Residues 165 to 176 (KDITEREKDTKG) are compositionally biased toward basic and acidic residues. Phosphoserine is present on residues serine 190, serine 191, serine 193, and serine 195. Residues 209 to 219 (SGEERERTTDK) are compositionally biased toward basic and acidic residues. Residues 220 to 237 (AKKRRKHKKHSKKKKKKA) show a composition bias toward basic residues.

This sequence belongs to the FAM133 family.

The sequence is that of Protein FAM133B (Fam133b) from Rattus norvegicus (Rat).